The chain runs to 878 residues: Alanine--tRNA ligase (878 aa).

Zn(2+) contacts are provided by His564, His568, Cys666, and His670.

The protein belongs to the class-II aminoacyl-tRNA synthetase family. In terms of assembly, homotetramer. It depends on Zn(2+) as a cofactor.

It localises to the cytoplasm. The catalysed reaction is tRNA(Ala) + L-alanine + ATP = L-alanyl-tRNA(Ala) + AMP + diphosphate. In terms of biological role, catalyzes the attachment of alanine to tRNA(Ala) in a two-step reaction: alanine is first activated by ATP to form Ala-AMP and then transferred to the acceptor end of tRNA(Ala). Also edits incorrectly charged Ser-tRNA(Ala) and Gly-tRNA(Ala) via its editing domain. In Buchnera aphidicola subsp. Acyrthosiphon pisum (strain APS) (Acyrthosiphon pisum symbiotic bacterium), this protein is Alanine--tRNA ligase.